The sequence spans 395 residues: Beta-1,4-galactosyltransferase 3 (395 aa).

Residues 1-10 (MLRRLLERPC) are Cytoplasmic-facing. A helical; Signal-anchor for type II membrane protein transmembrane segment spans residues 11–31 (TLALLVGSQLAVMMYLSLGGF). The Lumenal segment spans residues 32–395 (RSLSALFGRD…ANHTAPHGSH (364 aa)). The N-linked (GlcNAc...) asparagine glycan is linked to asparagine 57. Cysteine 79 and cysteine 121 are joined by a disulfide. UDP-alpha-D-galactose contacts are provided by residues 132-136 (PHRAR), 171-173 (FNR), 198-199 (VD), tyrosine 228, and tryptophan 260. Cysteine 192 and cysteine 211 are oxidised to a cystine. Aspartate 199 contacts Mn(2+). Position 262 to 265 (262 to 265 (GEDD)) interacts with N-acetyl-D-glucosamine. Histidine 293 is a binding site for Mn(2+). Residue 293-295 (HRG) coordinates UDP-alpha-D-galactose. Arginine 305 contributes to the N-acetyl-D-glucosamine binding site. 2 N-linked (GlcNAc...) asparagine glycosylation sites follow: asparagine 339 and asparagine 387. Residues 341-395 (TADIGTDPRGPRAPSGPRYPPGSSQAFRQEMLQRRPPARPGPLPTANHTAPHGSH) are disordered.

This sequence belongs to the glycosyltransferase 7 family. It depends on Mn(2+) as a cofactor.

Its subcellular location is the golgi apparatus. It is found in the golgi stack membrane. The enzyme catalyses an N-acetyl-beta-D-glucosaminyl derivative + UDP-alpha-D-galactose = a beta-D-galactosyl-(1-&gt;4)-N-acetyl-beta-D-glucosaminyl derivative + UDP + H(+). It carries out the reaction N-acetyl-D-glucosamine + UDP-alpha-D-galactose = beta-D-galactosyl-(1-&gt;4)-N-acetyl-D-glucosamine + UDP + H(+). The catalysed reaction is a beta-D-GlcNAc-(1-&gt;3)-beta-D-Gal-(1-&gt;4)-beta-D-Glc-(1&lt;-&gt;1)-Cer(d18:1(4E)) + UDP-alpha-D-galactose = a neolactoside nLc4Cer(d18:1(4E)) + UDP + H(+). It catalyses the reaction a beta-D-glucosylceramide + UDP-alpha-D-galactose = a beta-D-galactosyl-(1-&gt;4)-beta-D-glucosyl-(1&lt;-&gt;1)-ceramide + UDP + H(+). The enzyme catalyses a neolactoside IV(3)-beta-GlcNAc-nLc4Cer + UDP-alpha-D-galactose = a neolactoside nLc6Cer + UDP + H(+). The protein operates within protein modification; protein glycosylation. Responsible for the synthesis of complex-type N-linked oligosaccharides in many glycoproteins as well as the carbohydrate moieties of glycolipids. The sequence is that of Beta-1,4-galactosyltransferase 3 (B4GALT3) from Cricetulus griseus (Chinese hamster).